The following is a 1407-amino-acid chain: DNA-directed RNA polymerase subunit beta' (1407 aa).

4 residues coordinate Zn(2+): C70, C72, C85, and C88. Mg(2+)-binding residues include D460, D462, and D464. Zn(2+) contacts are provided by C814, C888, C895, and C898. K972 carries the N6-acetyllysine modification.

It belongs to the RNA polymerase beta' chain family. As to quaternary structure, the RNAP catalytic core consists of 2 alpha, 1 beta, 1 beta' and 1 omega subunit. When a sigma factor is associated with the core the holoenzyme is formed, which can initiate transcription. Requires Mg(2+) as cofactor. The cofactor is Zn(2+).

The enzyme catalyses RNA(n) + a ribonucleoside 5'-triphosphate = RNA(n+1) + diphosphate. Functionally, DNA-dependent RNA polymerase catalyzes the transcription of DNA into RNA using the four ribonucleoside triphosphates as substrates. The chain is DNA-directed RNA polymerase subunit beta' from Escherichia coli (strain SMS-3-5 / SECEC).